The following is a 186-amino-acid chain: Ribosome-recycling factor (186 aa).

Belongs to the RRF family.

Its subcellular location is the cytoplasm. Functionally, responsible for the release of ribosomes from messenger RNA at the termination of protein biosynthesis. May increase the efficiency of translation by recycling ribosomes from one round of translation to another. The sequence is that of Ribosome-recycling factor from Rickettsia felis (strain ATCC VR-1525 / URRWXCal2) (Rickettsia azadi).